The primary structure comprises 64 residues: MPKLKTRKAAAKRYKRTGTSNFLRRHAFKGHLLMKKSNKQKRKLSQTICVSRSDIKSIKLMLPY.

This sequence belongs to the bacterial ribosomal protein bL35 family.

It localises to the plastid. The protein localises to the chloroplast. This chain is Large ribosomal subunit protein bL35c, found in Phaeodactylum tricornutum (strain CCAP 1055/1).